Here is a 331-residue protein sequence, read N- to C-terminus: DNA double-strand break repair nuclease NurA (331 aa).

Mn(2+) is bound by residues Asp-56 and Asp-131.

This sequence belongs to the NurA family. In terms of assembly, homodimer. Interacts with SSB. The cofactor is Mn(2+).

With respect to regulation, the 5'-3' ssDNA and dsDNA exonuclease and ssDNA endonuclease activities are inhibited by SSB (single-stranded DNA-binding protein). In terms of biological role, involved in DNA double-strand break (DSB) repair. Probably acts with HerA to stimulate resection of the 5' strand and produce the long 3' single-strand that is required for RadA loading. Exhibits both single-stranded endonuclease activity and 5'-3' exonuclease activity on single-stranded and double-stranded DNA. The chain is DNA double-strand break repair nuclease NurA from Sulfurisphaera tokodaii (strain DSM 16993 / JCM 10545 / NBRC 100140 / 7) (Sulfolobus tokodaii).